A 138-amino-acid chain; its full sequence is Large ribosomal subunit protein bL19 (138 aa).

The protein belongs to the bacterial ribosomal protein bL19 family.

Functionally, this protein is located at the 30S-50S ribosomal subunit interface and may play a role in the structure and function of the aminoacyl-tRNA binding site. In Leptospira interrogans serogroup Icterohaemorrhagiae serovar copenhageni (strain Fiocruz L1-130), this protein is Large ribosomal subunit protein bL19.